Here is a 426-residue protein sequence, read N- to C-terminus: MLASASRERPGYTAGVAAPDLLDPKSAAQNSKPRLSFSAKPTVLASRVESDSAINVMKWKTVSTIFLVVVLYLIIGATVFKALEQPQEISQRTTIVIQKQNFIAQHACVNSTELDELIQQIVTAINAGIIPLGNNSNQVSHWDLGSSFFFAGTVITTIGFGNISPRTEGGKIFCIIYALLGIPLFGFLLAGVGDQLGTIFGKGIAKVEDTFIKWNVSQTKIRIISTIIFILFGCVLFVALPAVIFKHIEGWSALDAIYFVVITLTTIGFGDYVAGGSDIEYLDFYKPVVWFWILVGLAYFAAVLSMIGDWLRVISKKTKEEVGEFRAHAAEWTANVTAEFKETRRRLSVEIYDKFQRATSVKRKLSAELAGNHNQELTPCRRTLSVNHLTSEREVLPPLLKAESIYLNGLTPHCAAEDIAVIENMK.

Over 1 to 61 (MLASASRERP…SAINVMKWKT (61 aa)) the chain is Cytoplasmic. Important for GNG4 binding and L-glutamate release in astrocytes stretches follow at residues 17–38 (AAPD…LSFS) and 51–61 (DSAINVMKWKT). A helical transmembrane segment spans residues 62-82 (VSTIFLVVVLYLIIGATVFKA). 2 N-linked (GlcNAc...) asparagine glycosylation sites follow: Asn110 and Asn134. Residues 144–170 (LGSSFFFAGTVITTIGFGNISPRTEGG) constitute an intramembrane region (pore-forming). Positions 157, 158, 159, and 160 each coordinate K(+). The selectivity filter 1 stretch occupies residues 157-162 (TIGFGN). A helical transmembrane segment spans residues 172–192 (IFCIIYALLGIPLFGFLLAGV). The Cytoplasmic segment spans residues 193-222 (GDQLGTIFGKGIAKVEDTFIKWNVSQTKIR). The chain crosses the membrane as a helical span at residues 223 to 243 (IISTIIFILFGCVLFVALPAV). The pore-forming intramembrane region spans 253–283 (ALDAIYFVVITLTTIGFGDYVAGGSDIEYLD). Residues Thr266, Ile267, Gly268, and Phe269 each coordinate K(+). Residues 266 to 271 (TIGFGD) are selectivity filter 2. A helical membrane pass occupies residues 288–308 (VVWFWILVGLAYFAAVLSMIG). Over 309–426 (DWLRVISKKT…EDIAVIENMK (118 aa)) the chain is Cytoplasmic. The tract at residues 313 to 326 (VISKKTKEEVGEFR) is interaction with AKAP5. Residues 337-385 (TAEFKETRRRLSVEIYDKFQRATSVKRKLSAELAGNHNQELTPCRRTLS) are essential for chloroform and halothane sensitivity. Ser348 carries the phosphoserine; by PKA modification.

The protein belongs to the two pore domain potassium channel (TC 1.A.1.8) family. Homodimer; disulfide-linked. Forms heterodimers with other 2-pore domain K(+) channel subunits, such as KCNK1, KCNK4, KCNK10 and KCNK18. Interacts with AKAP5; the channel is recruited to postsynaptic microdomains by AKAP5 where it can integrate neurotransmitter receptor signals. Part of a complex composed of AKAP5 and ADRB2. Upon AKAP5 binding, the channel is no longer sensitive to intracellular acidification, membrane stretch or arachidonic acid stimuli. Interacts with POPDC1; the interaction enhances KCNK2 surface expression and is inhibited by cAMP. Interacts (via N-terminus) with G-protein subunit GNG4 (via C-terminus); this interaction confers ion selectivity to L-glutamate and Cl(-) anions. In terms of processing, phosphorylation at Ser-348 controls the reversible conversion from a leak channel to a voltage-dependent channel. As to expression, expressed in cardiomyocytes (at protein level). Expressed in various brain regions including the lateral olfactory tract, piriform cortex of the forebrain, paraventricular and anteromedial thalamic nuclei, brainstem, caudate putamen, nucleus accumbens, neocortex and interpeduncular nucleus. Detected in astrocytes in hippocampus stratum radiatum. Expressed in brain and kidney.

Its subcellular location is the cell membrane. It is found in the endoplasmic reticulum membrane. The protein resides in the cell projection. The protein localises to the axon. It localises to the dendrite. Its subcellular location is the postsynaptic density membrane. It is found in the sarcolemma. It carries out the reaction K(+)(in) = K(+)(out). The catalysed reaction is L-glutamate(out) = L-glutamate(in). It catalyses the reaction chloride(in) = chloride(out). The enzyme catalyses Rb(+)(in) = Rb(+)(out). It carries out the reaction Cs(+)(in) = Cs(+)(out). Activated by various stimuli including intracellular acidic pH, mechanical stretch and polyunsaturated fatty acids such as arachidonic acid. In terms of biological role, k(+) channel that conducts voltage-dependent outward rectifying currents upon membrane depolarization. Voltage sensing is coupled to K(+) electrochemical gradient in an 'ion flux gating' mode where outward but not inward ion flow opens the gate. Converts to voltage-independent 'leak' conductance mode upon stimulation by various stimuli including mechanical membrane stretch, acidic pH, heat and lipids. Reversibly converts between a voltage-insensitive K(+) 'leak' channel and a voltage-dependent outward rectifying K(+) channel in a phosphorylation-dependent manner. Homo- and heterodimerizes to form functional channels with distinct regulatory and gating properties. In trigeminal ganglia sensory neurons, the heterodimer of KCNK2/TREK-1 and KCNK18/TRESK inhibits neuronal firing and neurogenic inflammation by stabilizing the resting membrane potential at K(+) equilibrium potential as well as by regulating the threshold of action potentials and the spike frequency. At trigeminal A-beta afferent nerves, the heterodimer of KCNK2/TREK-1 and KCNK4/TRAAK is mostly coexpressed at nodes of Ranvier where it conducts voltage-independent mechanosensitive and thermosensitive currents, allowing rapid action potential repolarization, high speed and high frequence saltatory conduction on myelinated nerves to ensure prompt sensory responses. In hippocampal astrocytes, the heterodimer of KCNK2/TREK-1 and KCNK1/TWIK-1 allows passive K(+) conductance under basal conditions, but changes ion selectivity and becomes permeable to L-glutamate and Cl(-) ions upon binding to G-protein subunit GNG4 in stimulated astrocytes. Mediates rapid L-glutamate release in response to activation of G-protein-coupled receptors such as F2R and CNR1. In hippocampal pyramidal neurons, the homodimer of KCNK2/TREK-1 contributes to gamma-aminobutyric acid (GABA) B-induced slow inhibitory postsynaptic potential. Associates with AKAP5 and Gs-protein-coupled receptor B2AR at postsynaptic dense bodies and converts to a leak channel no longer sensitive to stimulation by arachidonic acid, acidic pH or mechanical stress, nor inhibited by Gq-coupled receptors but still under the negative control of Gs-coupled receptors. Permeable to other monovalent cations such as Rb(+) and Cs(+). Its function is as follows. Does not display channel activity but reduces the channel activity of isoform 1, isoform 2 and isoform 4 and reduces cell surface expression of isoform 2. This chain is Potassium channel subfamily K member 2, found in Rattus norvegicus (Rat).